The chain runs to 241 residues: Demethylmenaquinone methyltransferase (241 aa).

Residues Thr-60, Asp-81, and Asp-106–Ala-107 contribute to the S-adenosyl-L-methionine site.

The protein belongs to the class I-like SAM-binding methyltransferase superfamily. MenG/UbiE family.

It carries out the reaction a 2-demethylmenaquinol + S-adenosyl-L-methionine = a menaquinol + S-adenosyl-L-homocysteine + H(+). The protein operates within quinol/quinone metabolism; menaquinone biosynthesis; menaquinol from 1,4-dihydroxy-2-naphthoate: step 2/2. In terms of biological role, methyltransferase required for the conversion of demethylmenaquinol (DMKH2) to menaquinol (MKH2). The polypeptide is Demethylmenaquinone methyltransferase (Staphylococcus carnosus (strain TM300)).